We begin with the raw amino-acid sequence, 103 residues long: Histone H4 (103 aa).

Gly residues predominate over residues 1 to 14 (MSGRGKGGKGLGKG). The tract at residues 1 to 20 (MSGRGKGGKGLGKGGAKRHR) is disordered. Residue S2 is modified to N-acetylserine. N6-acetyl-N6-methyllysine; alternate occurs at positions 6 and 13. At K17 the chain carries N6-acetyllysine. The DNA-binding element occupies 17–21 (KRHRK). Position 21 is an N6-methyllysine (K21).

Belongs to the histone H4 family. The nucleosome is a histone octamer containing two molecules each of H2A, H2B, H3 and H4 assembled in one H3-H4 heterotetramer and two H2A-H2B heterodimers. The octamer wraps approximately 147 bp of DNA.

It localises to the nucleus. The protein resides in the chromosome. Functionally, core component of nucleosome. Nucleosomes wrap and compact DNA into chromatin, limiting DNA accessibility to the cellular machineries which require DNA as a template. Histones thereby play a central role in transcription regulation, DNA repair, DNA replication and chromosomal stability. DNA accessibility is regulated via a complex set of post-translational modifications of histones, also called histone code, and nucleosome remodeling. This is Histone H4 (H4DEKL) from Dendronephthya klunzingeri (Klunzinger's soft coral).